Reading from the N-terminus, the 187-residue chain is Protein GrpE (187 aa).

A disordered region spans residues 1-23 (MADEQNLDAQAQDQAAEAGAGEE). Residues 7-23 (LDAQAQDQAAEAGAGEE) show a composition bias toward low complexity.

Belongs to the GrpE family. As to quaternary structure, homodimer.

It is found in the cytoplasm. Participates actively in the response to hyperosmotic and heat shock by preventing the aggregation of stress-denatured proteins, in association with DnaK and GrpE. It is the nucleotide exchange factor for DnaK and may function as a thermosensor. Unfolded proteins bind initially to DnaJ; upon interaction with the DnaJ-bound protein, DnaK hydrolyzes its bound ATP, resulting in the formation of a stable complex. GrpE releases ADP from DnaK; ATP binding to DnaK triggers the release of the substrate protein, thus completing the reaction cycle. Several rounds of ATP-dependent interactions between DnaJ, DnaK and GrpE are required for fully efficient folding. The protein is Protein GrpE of Pseudomonas savastanoi pv. phaseolicola (strain 1448A / Race 6) (Pseudomonas syringae pv. phaseolicola (strain 1448A / Race 6)).